A 569-amino-acid polypeptide reads, in one-letter code: Laccase-13 (569 aa).

A signal peptide spans 1–21 (MEQLRPFFLLLAIFVASLVNA). 2 Plastocyanin-like domains span residues 29 to 145 (VIQE…PPLS) and 157 to 308 (REIT…YKDA). N-linked (GlcNAc...) asparagine glycosylation is present at asparagine 75. 4 residues coordinate Cu cation: histidine 79, histidine 81, histidine 124, and histidine 126. Residues asparagine 186, asparagine 296, asparagine 330, asparagine 381, asparagine 391, and asparagine 432 are each glycosylated (N-linked (GlcNAc...) asparagine). Positions 418 to 553 (DFPPTPPVTF…AMVFLVENGE (136 aa)) constitute a Plastocyanin-like 3 domain. Cu cation contacts are provided by histidine 470, histidine 473, histidine 475, histidine 532, cysteine 533, histidine 534, and histidine 538.

The protein belongs to the multicopper oxidase family. Cu cation serves as cofactor. In terms of tissue distribution, mostly expressed in roots. Also detected in leaves, stems and flowers but not in siliques.

It is found in the secreted. It localises to the extracellular space. The protein resides in the apoplast. The catalysed reaction is 4 hydroquinone + O2 = 4 benzosemiquinone + 2 H2O. Functionally, lignin degradation and detoxification of lignin-derived products. The polypeptide is Laccase-13 (LAC13) (Arabidopsis thaliana (Mouse-ear cress)).